A 154-amino-acid chain; its full sequence is NADPH-dependent 7-cyano-7-deazaguanine reductase (154 aa).

The active-site Thioimide intermediate is the C52. The Proton donor role is filled by D59. Substrate-binding positions include 74 to 76 (VES) and 93 to 94 (HE).

The protein belongs to the GTP cyclohydrolase I family. QueF type 1 subfamily.

It is found in the cytoplasm. It catalyses the reaction 7-aminomethyl-7-carbaguanine + 2 NADP(+) = 7-cyano-7-deazaguanine + 2 NADPH + 3 H(+). It participates in tRNA modification; tRNA-queuosine biosynthesis. Its function is as follows. Catalyzes the NADPH-dependent reduction of 7-cyano-7-deazaguanine (preQ0) to 7-aminomethyl-7-deazaguanine (preQ1). This is NADPH-dependent 7-cyano-7-deazaguanine reductase from Sinorhizobium medicae (strain WSM419) (Ensifer medicae).